We begin with the raw amino-acid sequence, 314 residues long: ATP synthase gamma chain (314 aa).

Belongs to the ATPase gamma chain family. In terms of assembly, F-type ATPases have 2 components, CF(1) - the catalytic core - and CF(0) - the membrane proton channel. CF(1) has five subunits: alpha(3), beta(3), gamma(1), delta(1), epsilon(1). CF(0) has three main subunits: a, b and c.

The protein resides in the cellular thylakoid membrane. Functionally, produces ATP from ADP in the presence of a proton gradient across the membrane. The gamma chain is believed to be important in regulating ATPase activity and the flow of protons through the CF(0) complex. The protein is ATP synthase gamma chain of Synechococcus sp. (strain JA-3-3Ab) (Cyanobacteria bacterium Yellowstone A-Prime).